A 324-amino-acid chain; its full sequence is Chlorophyllase-1 (324 aa).

Positions 136-140 (GHSRG) match the GXSXG motif. Residue serine 138 is the Nucleophile of the active site. Active-site charge relay system residues include aspartate 168 and histidine 243.

This sequence belongs to the AB hydrolase superfamily. Lipase family. Expressed in seedlings, leaves, flowers and siliques, but not in roots.

It is found in the cytoplasm. Its subcellular location is the cytosol. It carries out the reaction a chlorophyll + H2O = a chlorophyllide + phytol + H(+). It catalyses the reaction chlorophyll a + H2O = phytol + chlorophyllide a + H(+). It participates in porphyrin-containing compound metabolism; chlorophyll degradation. Its function is as follows. Catalyzes the hydrolysis of ester bond in chlorophyll to yield chlorophyllide and phytol. Shows a preferential activity toward chlorophyll a. Does not seem to be required for chlorophyll degradation during senescence. May modulate the balance between different plant defense pathways. This is Chlorophyllase-1 from Arabidopsis thaliana (Mouse-ear cress).